Consider the following 458-residue polypeptide: Argininosuccinate lyase (458 aa).

The protein belongs to the lyase 1 family. Argininosuccinate lyase subfamily.

Its subcellular location is the cytoplasm. It carries out the reaction 2-(N(omega)-L-arginino)succinate = fumarate + L-arginine. Its pathway is amino-acid biosynthesis; L-arginine biosynthesis; L-arginine from L-ornithine and carbamoyl phosphate: step 3/3. The sequence is that of Argininosuccinate lyase from Salmonella typhi.